The following is an 86-amino-acid chain: Large ribosomal subunit protein eL43 (86 aa).

Residues Cys40, Cys43, Cys58, and Cys61 each coordinate Zn(2+). The C4-type zinc finger occupies Cys40 to Cys61.

The protein belongs to the eukaryotic ribosomal protein eL43 family. Putative zinc-binding subfamily. In terms of assembly, part of the 50S ribosomal subunit. Requires Zn(2+) as cofactor.

In terms of biological role, binds to the 23S rRNA. In Nanoarchaeum equitans (strain Kin4-M), this protein is Large ribosomal subunit protein eL43.